The chain runs to 152 residues: Deoxyuridine 5'-triphosphate nucleotidohydrolase (152 aa).

Substrate contacts are provided by residues 71–73, Asn-84, 88–90, and Met-98; these read RSG and LID.

It belongs to the dUTPase family. Mg(2+) serves as cofactor.

It catalyses the reaction dUTP + H2O = dUMP + diphosphate + H(+). The protein operates within pyrimidine metabolism; dUMP biosynthesis; dUMP from dCTP (dUTP route): step 2/2. Functionally, this enzyme is involved in nucleotide metabolism: it produces dUMP, the immediate precursor of thymidine nucleotides and it decreases the intracellular concentration of dUTP so that uracil cannot be incorporated into DNA. This chain is Deoxyuridine 5'-triphosphate nucleotidohydrolase, found in Aeromonas hydrophila subsp. hydrophila (strain ATCC 7966 / DSM 30187 / BCRC 13018 / CCUG 14551 / JCM 1027 / KCTC 2358 / NCIMB 9240 / NCTC 8049).